Reading from the N-terminus, the 222-residue chain is tRNA (guanine-N(1)-)-methyltransferase (222 aa).

S-adenosyl-L-methionine-binding positions include G111 and 131 to 136; that span reads LGNYVI.

The protein belongs to the RNA methyltransferase TrmD family. Homodimer.

It localises to the cytoplasm. It catalyses the reaction guanosine(37) in tRNA + S-adenosyl-L-methionine = N(1)-methylguanosine(37) in tRNA + S-adenosyl-L-homocysteine + H(+). Functionally, specifically methylates guanosine-37 in various tRNAs. This chain is tRNA (guanine-N(1)-)-methyltransferase, found in Leptospira borgpetersenii serovar Hardjo-bovis (strain JB197).